Reading from the N-terminus, the 323-residue chain is Protein SopB (323 aa).

The interval 1 to 20 (MKRAPVIPKHTLNTQPVEDT) is disordered. The span at 11–20 (TLNTQPVEDT) shows a compositional bias: polar residues. A DNA-binding region (H-T-H motif) is located at residues 180-199 (SALADAENISRKIITRCINT).

The protein belongs to the ParB family.

Its function is as follows. Control of plasmid partitioning; required to recognize the cis-acting. Binds specifically with the DNA segment containing the sopC region. SopB is trans-acting. The protein is Protein SopB (sopB) of Escherichia coli O157:H7.